The chain runs to 310 residues: Protein BIG GRAIN 1 (310 aa).

A disordered region spans residues 77–140; it reads SYRARAPGPH…EKKAKKPGAS (64 aa). Low complexity predominate over residues 90 to 106; sequence SSSSECSSYGGFSSSEA.

This sequence belongs to the BIG GRAIN 1 (BG1) plant protein family. Mostly expressed in the vascular tissues of leaves, culms and young panicles, especially in hulls.

The protein localises to the cell membrane. Functionally, involved in auxin transport. Positive regulator of the auxin signaling pathway involved in gravitropism, plant growth and grain development. This is Protein BIG GRAIN 1 from Oryza sativa subsp. japonica (Rice).